A 466-amino-acid chain; its full sequence is Argininosuccinate lyase (466 aa).

Serine 27, asparagine 114, and threonine 159 together coordinate 2-(N(omega)-L-arginino)succinate. Catalysis depends on histidine 160, which acts as the Proton acceptor. The active-site Proton donor is the serine 281. Asparagine 289, tyrosine 321, glutamine 326, and lysine 329 together coordinate 2-(N(omega)-L-arginino)succinate.

The protein belongs to the lyase 1 family. Argininosuccinate lyase subfamily. Homotetramer. As to expression, eye lens.

The enzyme catalyses 2-(N(omega)-L-arginino)succinate = fumarate + L-arginine. It participates in amino-acid biosynthesis; L-arginine biosynthesis; L-arginine from L-ornithine and carbamoyl phosphate: step 3/3. Functionally, delta crystallin, the principal crystallin in embryonic lens, is found only in birds and reptiles. This protein also functions as an enzymatically active argininosuccinate lyase. The chain is Argininosuccinate lyase (ASL) from Anser anser anser (Western greylag goose).